The sequence spans 356 residues: Histidinol-phosphate aminotransferase 2 (356 aa).

The residue at position 217 (lysine 217) is an N6-(pyridoxal phosphate)lysine.

Belongs to the class-II pyridoxal-phosphate-dependent aminotransferase family. Histidinol-phosphate aminotransferase subfamily. As to quaternary structure, homodimer. Pyridoxal 5'-phosphate is required as a cofactor.

The catalysed reaction is L-histidinol phosphate + 2-oxoglutarate = 3-(imidazol-4-yl)-2-oxopropyl phosphate + L-glutamate. It participates in amino-acid biosynthesis; L-histidine biosynthesis; L-histidine from 5-phospho-alpha-D-ribose 1-diphosphate: step 7/9. The polypeptide is Histidinol-phosphate aminotransferase 2 (Burkholderia pseudomallei (strain 1710b)).